The following is a 234-amino-acid chain: Sugar fermentation stimulation protein homolog (234 aa).

The protein belongs to the SfsA family.

This Bartonella quintana (strain Toulouse) (Rochalimaea quintana) protein is Sugar fermentation stimulation protein homolog.